The sequence spans 296 residues: Immediate early response gene 5-like protein (296 aa).

The protein belongs to the IER family.

The chain is Immediate early response gene 5-like protein (ier5l) from Xenopus tropicalis (Western clawed frog).